The following is a 663-amino-acid chain: DNA ligase (663 aa).

NAD(+) is bound by residues 31-35 (DFEFD), 80-81 (SL), and Glu-110. The active-site N6-AMP-lysine intermediate is Lys-112. Residues Arg-133, Glu-170, Lys-285, and Lys-309 each coordinate NAD(+). 4 residues coordinate Zn(2+): Cys-404, Cys-407, Cys-422, and Cys-428. A BRCT domain is found at 585–663 (FIDNKLAGKT…SEDEFLKMIE (79 aa)).

Belongs to the NAD-dependent DNA ligase family. LigA subfamily. The cofactor is Mg(2+). Mn(2+) is required as a cofactor.

It carries out the reaction NAD(+) + (deoxyribonucleotide)n-3'-hydroxyl + 5'-phospho-(deoxyribonucleotide)m = (deoxyribonucleotide)n+m + AMP + beta-nicotinamide D-nucleotide.. Its function is as follows. DNA ligase that catalyzes the formation of phosphodiester linkages between 5'-phosphoryl and 3'-hydroxyl groups in double-stranded DNA using NAD as a coenzyme and as the energy source for the reaction. It is essential for DNA replication and repair of damaged DNA. In Azobacteroides pseudotrichonymphae genomovar. CFP2, this protein is DNA ligase.